Here is a 221-residue protein sequence, read N- to C-terminus: 5-methylthioribulose-1-phosphate/5-deoxyribulose-1-phosphate aldolase (221 aa).

Glu-75 acts as the Proton donor/acceptor in catalysis. Glu-75, His-94, His-96, and His-157 together coordinate Co(2+).

It belongs to the aldolase class II family. It depends on Co(2+) as a cofactor.

It carries out the reaction 5-(methylsulfanyl)-D-ribulose 1-phosphate = 2-(methylsulfanyl)acetaldehyde + dihydroxyacetone phosphate. It catalyses the reaction 5-deoxy-D-ribulose 1-phosphate = dihydroxyacetone phosphate + acetaldehyde. The protein operates within amino-acid biosynthesis; L-methionine biosynthesis via salvage pathway. Uses 5-methylthioribulose-1-phosphate to yield 2-(methylthio)acetaldehyde and dihydroxyacetone phosphate. Can also use 5-deoxyribulose 1-phosphate to yield acetaldehyde and dihydroxyacetone phosphate. Part of a bifunctional DHAP-shunt salvage pathway for SAM by-products. The sequence is that of 5-methylthioribulose-1-phosphate/5-deoxyribulose-1-phosphate aldolase from Rhodospirillum rubrum (strain ATCC 11170 / ATH 1.1.1 / DSM 467 / LMG 4362 / NCIMB 8255 / S1).